Here is a 469-residue protein sequence, read N- to C-terminus: tRNA-2-methylthio-N(6)-dimethylallyladenosine synthase (469 aa).

The region spanning 22 to 142 (RKVFIKTYGC…LPEALRRAKE (121 aa)) is the MTTase N-terminal domain. [4Fe-4S] cluster contacts are provided by cysteine 31, cysteine 67, cysteine 105, cysteine 183, cysteine 187, and cysteine 190. Residues 169-401 (RARGVTAFLT…QALLLKQQQE (233 aa)) enclose the Radical SAM core domain. A TRAM domain is found at 404–466 (ESCIGKEIDL…NNSLFAERAE (63 aa)).

Belongs to the methylthiotransferase family. MiaB subfamily. Monomer. [4Fe-4S] cluster serves as cofactor.

The protein resides in the cytoplasm. It carries out the reaction N(6)-dimethylallyladenosine(37) in tRNA + (sulfur carrier)-SH + AH2 + 2 S-adenosyl-L-methionine = 2-methylsulfanyl-N(6)-dimethylallyladenosine(37) in tRNA + (sulfur carrier)-H + 5'-deoxyadenosine + L-methionine + A + S-adenosyl-L-homocysteine + 2 H(+). Catalyzes the methylthiolation of N6-(dimethylallyl)adenosine (i(6)A), leading to the formation of 2-methylthio-N6-(dimethylallyl)adenosine (ms(2)i(6)A) at position 37 in tRNAs that read codons beginning with uridine. The sequence is that of tRNA-2-methylthio-N(6)-dimethylallyladenosine synthase from Rhizobium leguminosarum bv. trifolii (strain WSM2304).